Consider the following 243-residue polypeptide: Probable transcriptional regulatory protein LGAS_1276 (243 aa).

The disordered stretch occupies residues Met1–Gly22.

The protein belongs to the TACO1 family.

It is found in the cytoplasm. In Lactobacillus gasseri (strain ATCC 33323 / DSM 20243 / BCRC 14619 / CIP 102991 / JCM 1131 / KCTC 3163 / NCIMB 11718 / NCTC 13722 / AM63), this protein is Probable transcriptional regulatory protein LGAS_1276.